The primary structure comprises 852 residues: Mannosyl-oligosaccharide glucosidase GCS1 (852 aa).

The tract at residues 1–31 (MTGASRRSARGRIKSSSLSPGSDEGSAYPPS) is disordered. At 1–51 (MTGASRRSARGRIKSSSLSPGSDEGSAYPPSIRRGKGKELVSIGAFKTNLK) the chain is on the cytoplasmic side. Residues 6-12 (RRSARGR) carry the Endoplasmic reticulum targeting motif. A compositionally biased stretch (low complexity) spans 15–26 (SSSLSPGSDEGS). The helical; Signal-anchor for type II membrane protein transmembrane segment at 52 to 72 (ILVGLIILGIIVIYFVINRLV) threads the bilayer. The Lumenal portion of the chain corresponds to 73 to 852 (RHGLLFDESQ…LIMSEDYPIF (780 aa)). The tract at residues 91-150 (PAPKVMDLSMFQGEHKESLYWGTYRPHVYFGVRARTPLSLVAGLMWLGVKDEMYVMRHFC) is required for endoplasmic reticulum targeting. Residues N282, N552, and N570 are each glycosylated (N-linked (GlcNAc...) asparagine). Residues 574-583 (QELNPKTLSS) show a composition bias toward polar residues. Residues 574-593 (QELNPKTLSSGLDDYPRASH) are disordered. The Proton donor role is filled by D586. N-linked (GlcNAc...) asparagine glycosylation is found at N633, N662, and N730. E819 acts as the Proton acceptor in catalysis.

It belongs to the glycosyl hydrolase 63 family. In terms of tissue distribution, constitutively expressed in roots, stems, leaves, flowers and siliques.

The protein localises to the endoplasmic reticulum membrane. The enzyme catalyses N(4)-(alpha-D-Glc-(1-&gt;2)-alpha-D-Glc-(1-&gt;3)-alpha-D-Glc-(1-&gt;3)-alpha-D-Man-(1-&gt;2)-alpha-D-Man-(1-&gt;2)-alpha-D-Man-(1-&gt;3)-[alpha-D-Man-(1-&gt;2)-alpha-D-Man-(1-&gt;3)-[alpha-D-Man-(1-&gt;2)-alpha-D-Man-(1-&gt;6)]-alpha-D-Man-(1-&gt;6)]-beta-D-Man-(1-&gt;4)-beta-D-GlcNAc-(1-&gt;4)-beta-D-GlcNAc)-L-asparaginyl-[protein] + H2O = N(4)-(alpha-D-Glc-(1-&gt;3)-alpha-D-Glc-(1-&gt;3)-alpha-D-Man-(1-&gt;2)-alpha-D-Man-(1-&gt;2)-alpha-D-Man-(1-&gt;3)-[alpha-D-Man-(1-&gt;2)-alpha-D-Man-(1-&gt;3)-[alpha-D-Man-(1-&gt;2)-alpha-D-Man-(1-&gt;6)]-alpha-D-Man-(1-&gt;6)]-beta-D-Man-(1-&gt;4)-beta-D-GlcNAc-(1-&gt;4)-beta-D-GlcNAc)-L-asparaginyl-[protein] + beta-D-glucose. It functions in the pathway glycan metabolism; N-glycan degradation. Functionally, cleaves the distal alpha 1,2-linked glucose residue from the Glc(3)Man(9)GlcNAc(2) oligosaccharide precursor. Required for the accumulation of seed storage proteins, the formation of protein bodies, cell differentiation, cellulose biosynthesis and organization (in cell walls), cell shape determination and organization (e.g. epidermal cells), and embryo development. Involved in root development. This Arabidopsis thaliana (Mouse-ear cress) protein is Mannosyl-oligosaccharide glucosidase GCS1 (GCS1).